A 225-amino-acid polypeptide reads, in one-letter code: Probable septum site-determining protein MinC (225 aa).

This sequence belongs to the MinC family. As to quaternary structure, interacts with MinD and FtsZ.

Functionally, cell division inhibitor that blocks the formation of polar Z ring septums. Rapidly oscillates between the poles of the cell to destabilize FtsZ filaments that have formed before they mature into polar Z rings. Prevents FtsZ polymerization. The chain is Probable septum site-determining protein MinC from Listeria monocytogenes serotype 4b (strain CLIP80459).